The sequence spans 209 residues: MNNYNILYFSNKCQASHQLLAMFDREKLTTFFYKICVDNNPNIPKQIRVTPTFIIRGVPFLYEGATAFAWLNKVKQYKYCMMMQQMGQKQQQYLQNMIGNTTSGSDMSVLGFSQTEMNGMSDIFSFFSKNIEQECQDALPQTFVPCKDIAKYEIFTPPLENGKYKIDKSSKIDPKKQKELELNLEAQRKKQDLLFKQSIDSFKNSTFDD.

This is an uncharacterized protein from Acanthamoeba polyphaga mimivirus (APMV).